Consider the following 166-residue polypeptide: Small ribosomal subunit protein uS5 (166 aa).

The S5 DRBM domain occupies 12–75; that stretch reads YIEKLVQVNR…EAARRNMIQV (64 aa).

This sequence belongs to the universal ribosomal protein uS5 family. In terms of assembly, part of the 30S ribosomal subunit. Contacts proteins S4 and S8.

With S4 and S12 plays an important role in translational accuracy. Functionally, located at the back of the 30S subunit body where it stabilizes the conformation of the head with respect to the body. The sequence is that of Small ribosomal subunit protein uS5 from Pseudomonas syringae pv. tomato (strain ATCC BAA-871 / DC3000).